A 934-amino-acid chain; its full sequence is Phosphoenolpyruvate carboxylase (934 aa).

Active-site residues include His-161 and Lys-593.

Belongs to the PEPCase type 1 family. It depends on Mg(2+) as a cofactor.

The enzyme catalyses oxaloacetate + phosphate = phosphoenolpyruvate + hydrogencarbonate. Forms oxaloacetate, a four-carbon dicarboxylic acid source for the tricarboxylic acid cycle. The protein is Phosphoenolpyruvate carboxylase (ppc) of Mycobacterium leprae (strain TN).